The following is a 447-amino-acid chain: MKVIVLGSSHGGYEAVEELLNLHPDAEIQWYEKGDFISFLSCGMQLYLEGKVKDVNSVRYMTGEKMESRGVNVFSNTEITAIQPKEHQVTVKDLVSGEERVENYDKLIISPGAVPFELDIPGKDLDNIYLMRGRQWAIKLKQKTVDPEVNNVVVIGSGYIGIEAAEAFAKAGKKVTVIDILDRPLGVYLDKEFTDVLTEEMEANNITIATGETVERYEGDGRVQKIVTDKNAYDADLVVVAVGVRPNTAWLKGTLELHPNGLIKTDEYMRTSEPDVFAVGDATLIKYNPADTEVNIALATNARKQGRFAVKNLEEPVKPFPGVQGSSGLAVFDYKFASTGINEVMAQKLGKETKAVTVVEDYLMDFNPDKQKAWFKLVYDPETTQILGAQLMSKADLTANINAISLAIQAKMTIEDLAYADFFFQPAFDKPWNIINTAALEAVKQER.

Residues 7–11 (GSSHG), Glu32, Cys42, 110–113 (SPGA), and Arg132 each bind FAD. Catalysis depends on His10, which acts as the Proton acceptor. Residue Cys42 is the Redox-active of the active site. Cys42 is subject to Cysteine sulfenic acid (-SOH). 4 residues coordinate NAD(+): Ile160, Asp179, Tyr188, and Gly243. Residue Asp281 coordinates FAD. Ala297 contacts NAD(+). Residue Ala299 participates in FAD binding. Gly328 provides a ligand contact to NAD(+).

Belongs to the class-III pyridine nucleotide-disulfide oxidoreductase family. As to quaternary structure, homotetramer. It depends on FAD as a cofactor.

The catalysed reaction is H2O2 + NADH + H(+) = NAD(+) + 2 H2O. In terms of biological role, peroxidase whose active site is a redox-active cysteine-sulfenic acid. This Enterococcus faecalis (strain ATCC 700802 / V583) protein is NADH peroxidase (npr).